The chain runs to 80 residues: Protein KorB (80 aa).

2 DNA-binding regions (H-T-H motif) span residues 13–32 (AEAALKPLGQQRINVLAELD) and 56–75 (NEVTAVAPNTARAWAKAEAE).

Repressor for the transcription of certain pIJ101 promoters, including those the from kilA and kilB loci. In Streptomyces lividans, this protein is Protein KorB (korB).